The sequence spans 172 residues: Large ribosomal subunit protein bL17 (172 aa).

Positions 123-172 (ATGSKRAQTEEAASQEPAAEAGKQPAEGATSVQTAEAADASQAEGEAEEK) are disordered. The span at 132 to 143 (EEAASQEPAAEA) shows a compositional bias: low complexity.

Belongs to the bacterial ribosomal protein bL17 family. As to quaternary structure, part of the 50S ribosomal subunit. Contacts protein L32.

The polypeptide is Large ribosomal subunit protein bL17 (Thermobifida fusca (strain YX)).